The following is a 420-amino-acid chain: Putative movement protein (420 aa).

2 stretches are compositionally biased toward low complexity: residues 1–18 (MPLT…TSFS) and 30–59 (TSCS…GSCP). Disordered regions lie at residues 1 to 77 (MPLT…TARP), 137 to 181 (SMSR…SARS), 195 to 219 (RPKT…STRT), 235 to 281 (IMSE…RPPP), 327 to 370 (PSAG…RPIQ), and 396 to 420 (LPPP…QPWP). Residues 60–69 (KTPPGTPPLP) show a composition bias toward pro residues. Residues 137–157 (SMSRRATQPPTTRSRVRPSTG) show a composition bias toward polar residues. Residues 158-181 (SRPPVSPLVTSSSPSPFSTLSARS) are compositionally biased toward low complexity. Residues 253-263 (GLRSASLSTAG) are compositionally biased toward polar residues. Positions 327 to 348 (PSAGSSPFTPTVSGCSASTSSA) are enriched in low complexity.

Functionally, cell-to-cell movement. This Maize rayado fino virus (isolate Costa Rica/Guapiles) (MRFV) protein is Putative movement protein.